Here is a 209-residue protein sequence, read N- to C-terminus: Ribosomal RNA small subunit methyltransferase G (209 aa).

S-adenosyl-L-methionine contacts are provided by residues Gly-71, Phe-76, 122–123, and Arg-135; that span reads AE.

Belongs to the methyltransferase superfamily. RNA methyltransferase RsmG family.

The protein localises to the cytoplasm. Specifically methylates the N7 position of a guanine in 16S rRNA. The sequence is that of Ribosomal RNA small subunit methyltransferase G from Flavobacterium psychrophilum (strain ATCC 49511 / DSM 21280 / CIP 103535 / JIP02/86).